The following is a 188-amino-acid chain: Pallidipin (188 aa).

A signal peptide spans 1–18 (MKVIIAATLLGILMHAFA). Cystine bridges form between Cys-21–Cys-137, Cys-55–Cys-184, and Cys-89–Cys-105.

The protein belongs to the calycin superfamily. Triabin family. In terms of tissue distribution, expressed in salivary glands.

It is found in the secreted. Has been described as a specific inhibitor of collagen-induced platelet aggregation. However, as it does not affect platelet shape change or adhesion, it is plausible that it exerts its antiplatelet activity by a mechanism similar to that of triplatin, moubatin and dipetalodipin as scavenging eicosanoids involved in inflammation such as thromboxane A2 (TXA2). The polypeptide is Pallidipin (Meccus pallidipennis (Triatomine bug)).